The primary structure comprises 505 residues: Sodium/sialic acid symporter NanT (505 aa).

The next 5 membrane-spanning stretches (helical) occupy residues 9 to 29, 45 to 65, 80 to 100, 128 to 148, and 155 to 175; these read LNYI…VYFA, IPGW…ITFM, IGQY…IPFF, FMLF…LALM, and PLMI…LGGI. Alanine 56 serves as a coordination point for Na(+). Threonine 58 provides a ligand contact to N-acetyl-alpha-neuraminate. Residue leucine 59 coordinates Na(+). 4 residues coordinate N-acetyl-alpha-neuraminate: serine 60, threonine 63, glutamine 82, and arginine 135. Aspartate 182 is a binding site for Na(+). 4 helical membrane passes run 183–203, 227–247, 280–300, and 318–338; these read VIQG…ICFN, FSWS…FFAS, LVAC…AYYT, and FYVI…AIFA. Residues alanine 339, serine 342, serine 343, serine 345, and serine 346 each coordinate Na(+). The next 4 membrane-spanning stretches (helical) occupy residues 378-398, 406-426, 435-455, and 457-477; these read TLTV…IMSN, FNSL…LGIF, ALLG…ATDL, and FFFY…LTAP.

The protein belongs to the sodium:solute symporter (SSF) (TC 2.A.21) family.

It is found in the cell inner membrane. The catalysed reaction is N-acetyl-alpha-neuraminate(out) + 2 Na(+)(out) = N-acetyl-alpha-neuraminate(in) + 2 Na(+)(in). Its function is as follows. Symporter that uses the Na(+) gradient as the driving force for the uptake of the sialic acid N-acetylneuraminic acid (Neu5Ac). Might play a role in persistence after colonization. This Aliivibrio fischeri (strain ATCC 700601 / ES114) (Vibrio fischeri) protein is Sodium/sialic acid symporter NanT.